Here is a 131-residue protein sequence, read N- to C-terminus: 23S rRNA-specific endonuclease VapC20 (131 aa).

Residues 2–125 (IFVDTSFWAA…FDGDFSAAGF (124 aa)) form the PINc domain. 2 residues coordinate Mg(2+): aspartate 5 and aspartate 98.

Belongs to the PINc/VapC protein family. It depends on Mg(2+) as a cofactor.

In terms of biological role, toxic component of a type II toxin-antitoxin (TA) system. An endoribonuclease that cleaves 23S rRNA in the sarcin-ricin loop (SRL). The SRL sequence is highly conserved and is implicated in GTP hydrolysis by EF-Tu and EF-G. Acts on purified ribosomes but not on isolated RNA. Its toxic effect is neutralized by coexpression with cognate antitoxin VapB20. The protein is 23S rRNA-specific endonuclease VapC20 (vapC20) of Mycobacterium tuberculosis (strain CDC 1551 / Oshkosh).